The following is a 119-amino-acid chain: Large ribosomal subunit protein uL14 (119 aa).

It belongs to the universal ribosomal protein uL14 family. In terms of assembly, part of the 50S ribosomal subunit. Forms a cluster with proteins L3 and L19. In the 70S ribosome, L14 and L19 interact and together make contacts with the 16S rRNA in bridges B5 and B8.

Binds to 23S rRNA. Forms part of two intersubunit bridges in the 70S ribosome. This is Large ribosomal subunit protein uL14 from Wolbachia pipientis subsp. Culex pipiens (strain wPip).